The following is a 255-amino-acid chain: 5-oxoprolinase subunit A (255 aa).

The protein belongs to the LamB/PxpA family. In terms of assembly, forms a complex composed of PxpA, PxpB and PxpC.

The enzyme catalyses 5-oxo-L-proline + ATP + 2 H2O = L-glutamate + ADP + phosphate + H(+). Catalyzes the cleavage of 5-oxoproline to form L-glutamate coupled to the hydrolysis of ATP to ADP and inorganic phosphate. This chain is 5-oxoprolinase subunit A, found in Rhodopseudomonas palustris (strain BisB18).